The primary structure comprises 529 residues: Bifunctional purine biosynthesis protein PurH (529 aa).

Residues 1 to 148 form the MGS-like domain; that stretch reads MQQRRPIRRA…KNHKDVAIVV (148 aa).

This sequence belongs to the PurH family.

The enzyme catalyses (6R)-10-formyltetrahydrofolate + 5-amino-1-(5-phospho-beta-D-ribosyl)imidazole-4-carboxamide = 5-formamido-1-(5-phospho-D-ribosyl)imidazole-4-carboxamide + (6S)-5,6,7,8-tetrahydrofolate. The catalysed reaction is IMP + H2O = 5-formamido-1-(5-phospho-D-ribosyl)imidazole-4-carboxamide. It functions in the pathway purine metabolism; IMP biosynthesis via de novo pathway; 5-formamido-1-(5-phospho-D-ribosyl)imidazole-4-carboxamide from 5-amino-1-(5-phospho-D-ribosyl)imidazole-4-carboxamide (10-formyl THF route): step 1/1. It participates in purine metabolism; IMP biosynthesis via de novo pathway; IMP from 5-formamido-1-(5-phospho-D-ribosyl)imidazole-4-carboxamide: step 1/1. The chain is Bifunctional purine biosynthesis protein PurH from Yersinia pseudotuberculosis serotype O:1b (strain IP 31758).